The following is a 123-amino-acid chain: Histone H2B (123 aa).

The tract at residues 1 to 31 (MPPKVASKGAKKAASKAKAARSGEKKKKRRR) is disordered. Residues 9-31 (GAKKAASKAKAARSGEKKKKRRR) show a composition bias toward basic residues. Ser-110 is a glycosylation site (O-linked (GlcNAc) serine). Lys-118 participates in a covalent cross-link: Glycyl lysine isopeptide (Lys-Gly) (interchain with G-Cter in ubiquitin).

It belongs to the histone H2B family. As to quaternary structure, the nucleosome is a histone octamer containing two molecules each of H2A, H2B, H3 and H4 assembled in one H3-H4 heterotetramer and two H2A-H2B heterodimers. The octamer wraps approximately 147 bp of DNA. Post-translationally, monoubiquitination of Lys-118 gives a specific tag for epigenetic transcriptional activation and is also prerequisite for histone H3 'Lys-4' and 'Lys-79' methylation. GlcNAcylation at Ser-110 promotes monoubiquitination of Lys-118. It fluctuates in response to extracellular glucose, and associates with transcribed genes.

The protein resides in the nucleus. Its subcellular location is the chromosome. In terms of biological role, core component of nucleosome. Nucleosomes wrap and compact DNA into chromatin, limiting DNA accessibility to the cellular machineries which require DNA as a template. Histones thereby play a central role in transcription regulation, DNA repair, DNA replication and chromosomal stability. DNA accessibility is regulated via a complex set of post-translational modifications of histones, also called histone code, and nucleosome remodeling. The polypeptide is Histone H2B (Platynereis dumerilii (Dumeril's clam worm)).